The primary structure comprises 295 residues: Probable phosphoglycerate mutase PMU1 (295 aa).

H61 serves as the catalytic Tele-phosphohistidine intermediate. The active-site Proton donor/acceptor is the E170.

This sequence belongs to the phosphoglycerate mutase family.

It is found in the cytoplasm. The protein localises to the nucleus. In terms of biological role, probable phosphomutase that may have a function related to the manipulation of phosphate groups on carbohydrates. Reduces trehalose-6-phosphate levels when overexpressed in TPS2-deleted cells. Reduces 5'-Phosphoribosyl-4-carboxamide-5-aminoimidazole (AICAR) levels, a metabolic intermediate at the crossroads between AMP and histidine biosynthesis pathways, when overexpressed in a ADE3-ADE16-ADE17 triple deletant. This is Probable phosphoglycerate mutase PMU1 from Saccharomyces cerevisiae (strain ATCC 204508 / S288c) (Baker's yeast).